A 384-amino-acid chain; its full sequence is MAFPCRRSLTAKTLACLLVGVSFLALQQWFLQAPRSPREERSPQEETPEGPTDAPAADEPPSELVPGPPCVANASANATADFEQLPARIQDFLRYRHCRHFPLLWDAPAKCAGGRGVFLLLAVKSAPEHYERRELIRRTWGQERSYGGRPVRRLFLLGTPGPEDEARAERLAELVALEAREHGDVLQWAFADTFLNLTLKHLHLLDWLAARCPHARFLLSGDDDVFVHTANVVRFLQAQPPGRHLFSGQLMEGSVPIRDSWSKYFVPPQLFPGSAYPVYCSGGGFLLSGPTARALRAAARHTPLFPIDDAYMGMCLERAGLAPSGHEGIRPFGVQLPGAQQSSFDPCMYRELLLVHRFAPYEMLLMWKALHSPALSCDRGHRVS.

Over 1 to 12 (MAFPCRRSLTAK) the chain is Cytoplasmic. A helical; Signal-anchor for type II membrane protein membrane pass occupies residues 13–31 (TLACLLVGVSFLALQQWFL). Residues 32-384 (QAPRSPREER…LSCDRGHRVS (353 aa)) lie on the Lumenal side of the membrane. The tract at residues 34–68 (PRSPREERSPQEETPEGPTDAPAADEPPSELVPGP) is disordered. Residues Asn73, Asn77, and Asn196 are each glycosylated (N-linked (GlcNAc...) asparagine).

It belongs to the glycosyltransferase 31 family. In terms of tissue distribution, present in stomach and colon (at protein level). Restricted in the stomach, colon and small intestine, where core 3 structure is present.

The protein resides in the golgi apparatus membrane. The catalysed reaction is a 3-O-[N-acetyl-alpha-D-galactosaminyl]-L-threonyl-[protein] + UDP-N-acetyl-alpha-D-glucosamine = a 3-O-[N-acetyl-beta-D-glucosaminyl-(1-&gt;3)-N-acetyl-alpha-D-galactosaminyl]-L-threonyl-[protein] + UDP + H(+). The enzyme catalyses a 3-O-[N-acetyl-alpha-D-galactosaminyl]-L-seryl-[protein] + UDP-N-acetyl-alpha-D-glucosamine = 3-O-[N-acetyl-beta-D-glucosaminyl-(1-&gt;3)-N-acetyl-alpha-D-galactosaminyl]-L-seryl-[protein] + UDP + H(+). It functions in the pathway protein modification; protein glycosylation. Its function is as follows. Beta-1,3-N-acetylglucosaminyltransferase that synthesizes the core 3 structure of the O-glycan, an important precursor in the biosynthesis of mucin-type glycoproteins. Plays an important role in the synthesis of mucin-type O-glycans in digestive organs. The sequence is that of Acetylgalactosaminyl-O-glycosyl-glycoprotein beta-1,3-N-acetylglucosaminyltransferase (B3GNT6) from Homo sapiens (Human).